We begin with the raw amino-acid sequence, 142 residues long: uncharacterized protein (142 aa).

N-linked (GlcNAc...) asparagine; by host glycans are attached at residues asparagine 29 and asparagine 67. A helical transmembrane segment spans residues 88 to 108 (VFYLGYPVIFIIGVTYFSIIA).

The protein resides in the membrane. This is an uncharacterized protein from Acanthamoeba polyphaga mimivirus (APMV).